A 288-amino-acid polypeptide reads, in one-letter code: Protoheme IX farnesyltransferase (288 aa).

The next 9 membrane-spanning stretches (helical) occupy residues 8 to 28 (IIKP…FLLA), 35 to 55 (VNLF…ASIF), 75 to 95 (IAIG…LLIL), 105 to 125 (FLTI…YSLL), 130 to 150 (SVYS…IGYC), 161 to 181 (FILL…IGLV), 205 to 225 (INII…FFAG), 230 to 250 (NYLF…IKGF), and 265 to 285 (IFLF…IDYK).

This sequence belongs to the UbiA prenyltransferase family. Protoheme IX farnesyltransferase subfamily.

It localises to the cell membrane. The enzyme catalyses heme b + (2E,6E)-farnesyl diphosphate + H2O = Fe(II)-heme o + diphosphate. It functions in the pathway porphyrin-containing compound metabolism; heme O biosynthesis; heme O from protoheme: step 1/1. Functionally, converts heme B (protoheme IX) to heme O by substitution of the vinyl group on carbon 2 of heme B porphyrin ring with a hydroxyethyl farnesyl side group. The chain is Protoheme IX farnesyltransferase from Wigglesworthia glossinidia brevipalpis.